A 440-amino-acid polypeptide reads, in one-letter code: Argininosuccinate lyase (440 aa).

It belongs to the lyase 1 family. Argininosuccinate lyase subfamily.

It localises to the cytoplasm. The enzyme catalyses 2-(N(omega)-L-arginino)succinate = fumarate + L-arginine. The protein operates within amino-acid biosynthesis; L-arginine biosynthesis; L-arginine from L-ornithine and carbamoyl phosphate: step 3/3. This chain is Argininosuccinate lyase, found in Clostridium botulinum (strain ATCC 19397 / Type A).